Consider the following 105-residue polypeptide: MFNQLLLEPNMCKISPDIHFTNNKAKMLQKMFLSTKLNYCLYHVTELRLAVLFFPHLALKLSSHYKGSKKKQSLRKFVYIQPSRRGNSSNLPDQRTQAICIDKKW.

This is an uncharacterized protein from Saccharomyces cerevisiae (strain ATCC 204508 / S288c) (Baker's yeast).